A 1237-amino-acid chain; its full sequence is ATP-dependent RNA helicase DEAH13 (1237 aa).

Disordered regions lie at residues Met1–Val51 and Ala115–Thr148. The segment covering Ser24 to Gly38 has biased composition (polar residues). A compositionally biased stretch (acidic residues) spans Ser131 to Met143. In terms of domain architecture, Helicase ATP-binding spans Met251–Leu443. Residue Gly264–Thr271 coordinates ATP. Positions Asp367–His370 match the DEAH box motif. Residues Asp543–Asp585 form a disordered region. The span at Asn567–Asp585 shows a compositional bias: acidic residues. A Helicase C-terminal domain is found at Ala605–Asn776. The interval Glu876 to Phe910 is disordered.

Belongs to the DEAD box helicase family. DEAH subfamily.

The catalysed reaction is ATP + H2O = ADP + phosphate + H(+). This is ATP-dependent RNA helicase DEAH13 from Arabidopsis thaliana (Mouse-ear cress).